The following is a 146-amino-acid chain: MKNEMNIQFTALSQNESFARVTVAAFIAQLDPTMDELTEIKTVVSEAVTNAIIHGYENSGQGNVYISVTLEDHIVYLTIRDEGVGIPDLEEARQPLFTTKPELERSGMGFTIMENFMDDISIDSSPEMGTTIHLTKHLSKSKALCN.

This sequence belongs to the anti-sigma-factor family.

The enzyme catalyses L-seryl-[protein] + ATP = O-phospho-L-seryl-[protein] + ADP + H(+). It catalyses the reaction L-threonyl-[protein] + ATP = O-phospho-L-threonyl-[protein] + ADP + H(+). Binds to sigma F and blocks its ability to form an RNA polymerase holoenzyme (E-sigma F). Phosphorylates SpoIIAA on a serine residue. This phosphorylation may enable SpoIIAA to act as an anti-anti-sigma factor that counteracts SpoIIAB and thus releases sigma F from inhibition. This Bacillus licheniformis protein is Anti-sigma F factor.